The following is a 198-amino-acid chain: Recombination protein RecR (198 aa).

The segment at 57 to 72 (CSICGNLTDEDPCAIC) adopts a C4-type zinc-finger fold. The Toprim domain occupies 80 to 175 (STILIVEDSR…KVTRLARGLA (96 aa)).

The protein belongs to the RecR family.

Functionally, may play a role in DNA repair. It seems to be involved in an RecBC-independent recombinational process of DNA repair. It may act with RecF and RecO. The protein is Recombination protein RecR of Streptococcus gordonii (strain Challis / ATCC 35105 / BCRC 15272 / CH1 / DL1 / V288).